We begin with the raw amino-acid sequence, 110 residues long: Large ribosomal subunit protein uL22 (110 aa).

This sequence belongs to the universal ribosomal protein uL22 family. As to quaternary structure, part of the 50S ribosomal subunit.

Its function is as follows. This protein binds specifically to 23S rRNA; its binding is stimulated by other ribosomal proteins, e.g. L4, L17, and L20. It is important during the early stages of 50S assembly. It makes multiple contacts with different domains of the 23S rRNA in the assembled 50S subunit and ribosome. In terms of biological role, the globular domain of the protein is located near the polypeptide exit tunnel on the outside of the subunit, while an extended beta-hairpin is found that lines the wall of the exit tunnel in the center of the 70S ribosome. This Vesicomyosocius okutanii subsp. Calyptogena okutanii (strain HA) protein is Large ribosomal subunit protein uL22.